The sequence spans 131 residues: Holo-[acyl-carrier-protein] synthase (131 aa).

Residues aspartate 8 and glutamate 59 each contribute to the Mg(2+) site.

It belongs to the P-Pant transferase superfamily. AcpS family. The cofactor is Mg(2+).

The protein localises to the cytoplasm. The catalysed reaction is apo-[ACP] + CoA = holo-[ACP] + adenosine 3',5'-bisphosphate + H(+). Its function is as follows. Transfers the 4'-phosphopantetheine moiety from coenzyme A to a Ser of acyl-carrier-protein. The polypeptide is Holo-[acyl-carrier-protein] synthase (Rickettsia felis (strain ATCC VR-1525 / URRWXCal2) (Rickettsia azadi)).